A 439-amino-acid polypeptide reads, in one-letter code: Transcriptional enhancer factor TEF-5 (439 aa).

Polar residues predominate over residues 1–12 (MASNSWTANSSP). A disordered region spans residues 1 to 34 (MASNSWTANSSPGEAREDGSEGLDKGLDNDAEGV). Ala-2 is modified (N-acetylalanine). Residues 14–28 (EAREDGSEGLDKGLD) show a composition bias toward basic and acidic residues. A DNA-binding region (TEA) is located at residues 28–104 (DNDAEGVWSP…QVLARKKVRE (77 aa)). Ser-148 carries the phosphoserine modification. The segment at 173 to 439 (GPSQDIKPFA…QHHVYKLVKD (267 aa)) is transcriptional activation.

As to quaternary structure, interacts with YAP1 and WWTR1/TAZ. As to expression, expressed in embryos as well as in many adult tissues.

The protein resides in the nucleus. Its function is as follows. Transcription factor which plays a key role in the Hippo signaling pathway, a pathway involved in organ size control and tumor suppression by restricting proliferation and promoting apoptosis. The core of this pathway is composed of a kinase cascade wherein MST1/MST2, in complex with its regulatory protein SAV1, phosphorylates and activates LATS1/2 in complex with its regulatory protein MOB1, which in turn phosphorylates and inactivates YAP1 oncoprotein and WWTR1/TAZ. Acts by mediating gene expression of YAP1 and WWTR1/TAZ, thereby regulating cell proliferation, migration and epithelial mesenchymal transition (EMT) induction. The protein is Transcriptional enhancer factor TEF-5 (Tead3) of Mus musculus (Mouse).